The chain runs to 297 residues: Nucleotide-binding protein CJA_2809 (297 aa).

8–15 lines the ATP pocket; sequence GLSGSGKT. Residue 59-62 coordinates GTP; that stretch reads DVRN.

Belongs to the RapZ-like family.

Displays ATPase and GTPase activities. The chain is Nucleotide-binding protein CJA_2809 from Cellvibrio japonicus (strain Ueda107) (Pseudomonas fluorescens subsp. cellulosa).